The primary structure comprises 500 residues: Na(+)/H(+) antiporter NhaB (500 aa).

The next 13 membrane-spanning stretches (helical) occupy residues 11–31 (HGFL…FLVL), 34–54 (LLLV…EFIF), 58–78 (MALK…ALLL), 96–116 (VILL…LLLF), 129–149 (AILS…LDAL), 150–170 (TVTA…HRVA), 205–225 (LLMH…VGEP), 241–261 (FFFK…LTCV), 311–331 (ILII…LMVI), 350–370 (FQDA…VAVI), 394–414 (MLYL…VATI), 450–470 (ATPN…APLI), and 477–497 (MVWM…WAVT).

Belongs to the NhaB Na(+)/H(+) (TC 2.A.34) antiporter family.

The protein resides in the cell inner membrane. The catalysed reaction is 2 Na(+)(in) + 3 H(+)(out) = 2 Na(+)(out) + 3 H(+)(in). In terms of biological role, na(+)/H(+) antiporter that extrudes sodium in exchange for external protons. This chain is Na(+)/H(+) antiporter NhaB, found in Pseudomonas putida (strain GB-1).